A 420-amino-acid polypeptide reads, in one-letter code: Protein ECERIFERUM 26-like (420 aa).

This sequence belongs to the plant acyltransferase family. In terms of tissue distribution, highly expressed in flowers. Expressed in leaves.

Its function is as follows. Involved in biosynthesis of the epicuticular wax. Plays a role in very-long-chain fatty acid (VLCFA) biosynthesis and is required for VLCFA elongation in leaf. Despite its classification as a BAHD acyltransferase based on sequence homology, CER26L does not seem to share the catalytic mechanism of the members of the BAHD family. This Arabidopsis thaliana (Mouse-ear cress) protein is Protein ECERIFERUM 26-like (CER26L).